Here is a 102-residue protein sequence, read N- to C-terminus: PqqA binding protein (102 aa).

The protein belongs to the PqqD family. Monomer. Interacts with PqqE.

It functions in the pathway cofactor biosynthesis; pyrroloquinoline quinone biosynthesis. Functions as a PqqA binding protein and presents PqqA to PqqE, in the pyrroloquinoline quinone (PQQ) biosynthetic pathway. The polypeptide is PqqA binding protein (Rhodopseudomonas palustris (strain HaA2)).